The chain runs to 378 residues: METTPKRSKTLLMSNGEERRSMTFGIEMLPDDLVLSCLARVPRMYYPILSLVSKRFRSFLTSTELYQTRNLLGSTESFLFVCLRIVNDSNPLRLFTLCRRPNSLTKVMVPILSPDSIPKFLPDVVLVGSNIYVIGGLINNNASHKVMVMDCRSHTWREAQGTCVARVSPSACVLDGKIYVAGGCKNLDATMWMEVFDTKTESWEFVSSPGEEICRDLTSCESIGYDGNVYVESMKTYGLYELHKGRWREGQYSMSRGGSLSSQCVIDNVLYRSWSYMVEWYDSENKLWNSLKGLEKLFIVTNQYVPTKCVNYGGKLAVFWLEKVYAKHLHQETKIWCAVITIERRKKEEIWGTREWFDLVFTTNEEMVDLTHVFAATL.

Residues 23–69 (TFGIEMLPDDLVLSCLARVPRMYYPILSLVSKRFRSFLTSTELYQTR) enclose the F-box domain. 3 Kelch repeats span residues 130–176 (NIYV…VLDG), 178–227 (IYVA…GYDG), and 262–308 (SQCV…VPTK).

This is Putative F-box/kelch-repeat protein At3g43710 from Arabidopsis thaliana (Mouse-ear cress).